We begin with the raw amino-acid sequence, 301 residues long: Ornithine carbamoyltransferase (301 aa).

Carbamoyl phosphate-binding positions include R100 and 127-130 (HPCQ). L-ornithine contacts are provided by residues N158, D221, and 225–226 (SM). Carbamoyl phosphate is bound by residues 260–261 (CL) and R288.

It belongs to the aspartate/ornithine carbamoyltransferase superfamily. OTCase family.

Its subcellular location is the cytoplasm. It catalyses the reaction carbamoyl phosphate + L-ornithine = L-citrulline + phosphate + H(+). The protein operates within amino-acid biosynthesis; L-arginine biosynthesis; L-arginine from L-ornithine and carbamoyl phosphate: step 1/3. Functionally, reversibly catalyzes the transfer of the carbamoyl group from carbamoyl phosphate (CP) to the N(epsilon) atom of ornithine (ORN) to produce L-citrulline. This is Ornithine carbamoyltransferase from Shewanella oneidensis (strain ATCC 700550 / JCM 31522 / CIP 106686 / LMG 19005 / NCIMB 14063 / MR-1).